Reading from the N-terminus, the 134-residue chain is Putative capsid protein (134 aa).

As to quaternary structure, homodimer.

It localises to the virion. In terms of biological role, self-assembles to form a helical, filamentous nucleocapsid. The capsid proteins wrap around the DNA and maintain it in an A-form by non-specific desolvation and specific coordination of the DNA phosphate groups by positively charged residues. This certainly protects the viral DNA under conditions such as the extreme desiccation of its host. The polypeptide is Putative capsid protein (Sulfolobus islandicus rod-shaped virus 1 (SIRV-1)).